Consider the following 3172-residue polypeptide: Erythronolide synthase EryA3 (3172 aa).

In terms of domain architecture, Ketosynthase family 3 (KS3) 1 spans 38–452 (GEPIAIVGMA…GTNAHVIVEE (415 aa)). Module stretches follow at residues 41 to 1464 (IAIV…DHYL) and 1492 to 2891 (IAIV…DHIG). The active-site Acyl-thioester intermediate; for beta-ketoacyl synthase 1 activity is cysteine 199. Residues histidine 334 and histidine 374 each act as for beta-ketoacyl synthase 1 activity in the active site. The interval 557–874 (VFPGQGAQWQ…LGEAYAQGVE (318 aa)) is acyltransferase 1. The active-site Acyl-ester intermediate; for acyltransferase 1 activity is the serine 643. Residues 1117–1294 (GTVLVTGGTG…VTSIAWGLWA (178 aa)) form a beta-ketoacyl reductase 1 region. Residues 1125–1128 (TGGI), 1148–1151 (GRRG), 1177–1178 (DV), lysine 1229, and 1249–1250 (FS) each bind NADP(+). Tyrosine 1264 serves as the catalytic Acyl-ester intermediate; for beta-ketoacyl reductase 1 activity. In terms of domain architecture, Carrier 1 spans 1392–1467 (EHLAHLIRAE…RLADHYLERL (76 aa)). Serine 1427 carries the post-translational modification O-(pantetheine 4'-phosphoryl)serine. One can recognise a Ketosynthase family 3 (KS3) 2 domain in the interval 1489–1916 (DDPIAIVGMA…GTNAHVIIAE (428 aa)). Cysteine 1661 functions as the Acyl-thioester intermediate; for beta-ketoacyl synthase 2 activity in the catalytic mechanism. Residues histidine 1797 and histidine 1837 each act as for beta-ketoacyl synthase 2 activity in the active site. Positions 2022–2331 (VFVFPGQGAQ…LARAHVHGVA (310 aa)) are acyltransferase 2. The active-site Acyl-ester intermediate; for acyltransferase 2 activity is the serine 2112. The interval 2557-2731 (GTALVTGGTG…ATSVAWGAWA (175 aa)) is beta-ketoacyl reductase 2. NADP(+)-binding positions include 2565–2568 (TGAL), 2588–2591 (SRRG), 2617–2618 (DV), lysine 2666, and 2686–2687 (FS). The Acyl-ester intermediate; for beta-ketoacyl reductase 2 activity role is filled by tyrosine 2701. Residues 2819–2894 (QELLEFTHSH…RLADHIGQQL (76 aa)) enclose the Carrier 2 domain. Position 2854 is an O-(pantetheine 4'-phosphoryl)serine (serine 2854). A thioesterase region spans residues 2960–3166 (ICCAGTAAIS…DAIARHIDAW (207 aa)). Threonine 2965 is a substrate binding site. The active-site Nucleophile; for thioesterase activity is the serine 3031. Residues alanine 3032 and aspartate 3058 each coordinate substrate. The active-site Proton acceptor; for thioesterase activity is the histidine 3148.

As to quaternary structure, homodimer. Erythronolide synthase is composed of EryAI, EryAII and EryAIII multimodular (2 modules) polypeptides each coding for a functional synthase subunit which participates in 2 of the six FAS-like elongation steps required for formation of the polyketide. Module 1, 2, 3, 4, 5, and 6 participating in biosynthesis steps 1, 2, 3, 4, 5, and 6, respectively. Pantetheine 4'-phosphate is required as a cofactor.

It catalyses the reaction 6 (S)-methylmalonyl-CoA + propanoyl-CoA + 6 NADPH + 12 H(+) = 6-deoxyerythronolide B + 6 CO2 + 6 NADP(+) + 7 CoA + H2O. It participates in antibiotic biosynthesis; erythromycin biosynthesis. Its activity is regulated as follows. Inhibited by diphenyl phosphonates derivatives such as diphenyl allylphosphonate. Involved in the biosynthesis of antibiotic erythromycin via the biosynthesis of its aglycone precursor, 6-deoxyerythronolide B (6-dEB). This is Erythronolide synthase EryA3 from Saccharopolyspora erythraea (Streptomyces erythraeus).